The sequence spans 250 residues: Kv channel-interacting protein 4 (250 aa).

Positions 2–44 are KIS; sequence NVRRVESISAQLEEASSTGGFLYAQNNTKRSIKERLMKLLPCS. Residues serine 17 and serine 56 each carry the phosphoserine modification. In terms of domain architecture, EF-hand 1; degenerate spans 61 to 117; the sequence is LEMATVRHRPEALELLEAQSKFTKKELQILYRGFKNECPSGVVNEETFKEIYSQFFP. 3 EF-hand domains span residues 120-155, 156-191, and 204-239; these read DSTTYAHFLFNAFDTDHNGAVSFEDFIKGLSILLRG, TVQEKLNWAFNLYDINKDGYITKEEMLDIMKAIYDM, and APRQHVETFFQKMDKNKDGVVTIDEFIESCQKDENI. Ca(2+)-binding residues include aspartate 133, aspartate 135, asparagine 137, aspartate 144, aspartate 169, asparagine 171, aspartate 173, tyrosine 175, glutamate 180, aspartate 217, asparagine 219, aspartate 221, and glutamate 228. Residues 237 to 250 form an interaction with KCND2 region; that stretch reads ENIMRSMQLFENVI.

This sequence belongs to the recoverin family. Component of heteromultimeric potassium channels. Identified in potassium channel complexes containing KCND1, KCND2, KCND3, KCNIP1, KCNIP2, KCNIP3, KCNIP4, DPP6 and DPP10. Interacts with the C-terminus of PSEN2 and probably PSEN1. Interacts with KCND2 and KCND3. In terms of tissue distribution, expressed in brain. Highly expressed by neurons in layers II-IV of cortex and in hippocampus, thalamus and the Purkinje cell layer of the cerebellum.

The protein resides in the cell membrane. Its subcellular location is the cytoplasm. It is found in the peroxisome. Functionally, regulatory subunit of Kv4/D (Shal)-type voltage-gated rapidly inactivating A-type potassium channels, such as KCND2/Kv4.2 and KCND3/Kv4.3. Modulates channel expression at the cell membrane, gating characteristics, inactivation kinetics and rate of recovery from inactivation in a calcium-dependent and isoform-specific manner. The chain is Kv channel-interacting protein 4 (Kcnip4) from Mus musculus (Mouse).